The sequence spans 536 residues: uncharacterized protein (536 aa).

The Radical SAM core domain occupies 163–394; that stretch reads LDAYDSMSVQ…MNFIPTRPLE (232 aa). [4Fe-4S] cluster is bound by residues Cys177, Cys181, and Cys184.

[4Fe-4S] cluster is required as a cofactor.

This is an uncharacterized protein from Synechocystis sp. (strain ATCC 27184 / PCC 6803 / Kazusa).